A 152-amino-acid polypeptide reads, in one-letter code: Large ribosomal subunit protein bL9 (152 aa).

The protein belongs to the bacterial ribosomal protein bL9 family.

Binds to the 23S rRNA. This Coxiella burnetii (strain Dugway 5J108-111) protein is Large ribosomal subunit protein bL9.